Here is a 186-residue protein sequence, read N- to C-terminus: Ribosome-recycling factor (186 aa).

It belongs to the RRF family.

The protein resides in the cytoplasm. Functionally, responsible for the release of ribosomes from messenger RNA at the termination of protein biosynthesis. May increase the efficiency of translation by recycling ribosomes from one round of translation to another. This is Ribosome-recycling factor from Pediococcus pentosaceus (strain ATCC 25745 / CCUG 21536 / LMG 10740 / 183-1w).